Here is a 264-residue protein sequence, read N- to C-terminus: Ribosomal protein L11 methyltransferase (264 aa).

4 residues coordinate S-adenosyl-L-methionine: Thr-116, Gly-137, Asp-159, and Asn-200.

This sequence belongs to the methyltransferase superfamily. PrmA family.

It is found in the cytoplasm. The catalysed reaction is L-lysyl-[protein] + 3 S-adenosyl-L-methionine = N(6),N(6),N(6)-trimethyl-L-lysyl-[protein] + 3 S-adenosyl-L-homocysteine + 3 H(+). Functionally, methylates ribosomal protein L11. This Thermotoga petrophila (strain ATCC BAA-488 / DSM 13995 / JCM 10881 / RKU-1) protein is Ribosomal protein L11 methyltransferase.